The sequence spans 283 residues: 4-diphosphocytidyl-2-C-methyl-D-erythritol kinase (283 aa).

Residue K12 is part of the active site. 94-104 (PAQAGLGGGSS) is an ATP binding site. D136 is an active-site residue.

Belongs to the GHMP kinase family. IspE subfamily.

It catalyses the reaction 4-CDP-2-C-methyl-D-erythritol + ATP = 4-CDP-2-C-methyl-D-erythritol 2-phosphate + ADP + H(+). Its pathway is isoprenoid biosynthesis; isopentenyl diphosphate biosynthesis via DXP pathway; isopentenyl diphosphate from 1-deoxy-D-xylulose 5-phosphate: step 3/6. Its function is as follows. Catalyzes the phosphorylation of the position 2 hydroxy group of 4-diphosphocytidyl-2C-methyl-D-erythritol. The protein is 4-diphosphocytidyl-2-C-methyl-D-erythritol kinase of Acidovorax sp. (strain JS42).